The chain runs to 1323 residues: MLDVNFFDELRIGLATADDIRRWSRGEVKKPETINYRTLKPEKDGLFCERIFGPTRDWECSCGKYKRVRYKGIICERCGVEVTKSKVRRERMGHIELAAPVTHIWYFKGVPSRLGYLLDLAPKDLEKIIYFAANIITSVDEDARHSDQTTLEAEMLLEKKEVEQDRDADLADRAKTLEEDLAELEAAGAKADAKKKVQNAADREMRHIRERAEREVERLDEIWNTFVKLAPKQMIADETLYEELLDRYEDYFTGGMGAEAIQTLIRNFDLEAEAESLREVIRDGKGQRKLRALKRLKVVAAFLRSGNDPAGMVLDCIPVIPPELRPMVQLDGGRFATSDLNDLYRRVINRNNRLKRMLDLGAPEIIVNNEKRMLQESVDALFDNGRRGRPVTGPGNRPLKSLSDLLKGKQGRFRQNLLGKRVDYSGRSVIIVGPQLKLHQCGLPKLMALELFKPFVMKRLVEKSYAQNIKSAKRMVERQRPEVWDVLEEAIAEHPVMLNRAPTLHRLGIQAFEPVLIEGKAIQLHPLACEAFNADFDGDQMAVHLPLSDEAQAEARILMLASNNILSPASGKPLAMPRLDMVTGLYYLTLIKGKEEFGGQGAFTEATEQGPATGVYTSLAEAIMAYDRGVLGLQAPIHVRIDHLRPPAEVEAEQFPDGWQKGQTWTAETTLGRVQFNELLPWNYPYVEGVMDKKNQAVVINDLAAKYPMITVAQTVDKLKDAGFYWATRSGVTITMHDVLVLPNKQEILDEYEAKAQRIEKKLARGKINESERYQSLVDLWKEATDFVGESVEKLYPDDNPIPMIVKSGAAGNMRQIWTLAGMKGMVTNSRGDYITRPVKTSFREGLSVLEYFNNSHGSRKGLADTALRTADSGYLTRRLVDVAQDVIVREDDCGTKQGVVLDVCTPVLDANGEKTGEFARADFVETSVLGRFLAADAIGANGEVVCEAGTVIGELELAELVKAGVETIKARSVMTCGTATGVCSTCYGKSMATGKKVEIGEAVGIVAAQSIGEPGTQLTMRTFHLGGVGGDITGGLPRVQELFEARVPKAKSPIASVDGKIKIEDDDAFFTLTIIPDDGSEEVVYEKLSKRQGLATLGTGGVERPLRDGDHVKMGQQLLKGAADPHEVLRVMGRRGVQQHLINEVQKVYRDQGVAIHDKHIEIIVRQMLRRVTVIDSGSTEYLPGSLVDHSDAVAASKEAVKTGGRPVEVRAEIMGITKASLATESWLSAASFQETTRVLTDAAINKRSDKLIGLKENVIIGKLIPAGTGIARYRNIQVQPTEEARAAAFTLPSTFGDGFYGDEGYGEFTGASVPLDDLGLH.

The Zn(2+) site is built by C60, C62, C75, and C78. Mg(2+)-binding residues include D535, D537, and D539. Zn(2+)-binding residues include C894, C977, C984, and C987.

The protein belongs to the RNA polymerase beta' chain family. In terms of assembly, the RNAP catalytic core consists of 2 alpha, 1 beta, 1 beta' and 1 omega subunit. When a sigma factor is associated with the core the holoenzyme is formed, which can initiate transcription. It depends on Mg(2+) as a cofactor. Zn(2+) serves as cofactor.

It catalyses the reaction RNA(n) + a ribonucleoside 5'-triphosphate = RNA(n+1) + diphosphate. DNA-dependent RNA polymerase catalyzes the transcription of DNA into RNA using the four ribonucleoside triphosphates as substrates. In Corynebacterium urealyticum (strain ATCC 43042 / DSM 7109), this protein is DNA-directed RNA polymerase subunit beta'.